A 135-amino-acid polypeptide reads, in one-letter code: DNA-directed RNA polymerase subunit omega (135 aa).

Residues 84-106 form a disordered region; it reads IAGHSSHVSPSRSSRHTGLGKSF.

It belongs to the RNA polymerase subunit omega family. As to quaternary structure, the RNAP catalytic core consists of 2 alpha, 1 beta, 1 beta' and 1 omega subunit. When a sigma factor is associated with the core the holoenzyme is formed, which can initiate transcription.

The catalysed reaction is RNA(n) + a ribonucleoside 5'-triphosphate = RNA(n+1) + diphosphate. Promotes RNA polymerase assembly. Latches the N- and C-terminal regions of the beta' subunit thereby facilitating its interaction with the beta and alpha subunits. The chain is DNA-directed RNA polymerase subunit omega from Anaplasma phagocytophilum (strain HZ).